The primary structure comprises 114 residues: MPKAAGDAKLLIQSLNKAYAATPTNLKIIDLYVVFAVATALVQVVYMGIVGSFPFNSFLSGVLSSIGTAVLGVCLRIQVNKDNKEFKDLPPERAFADFVLCNLVLHLVIMNFLG.

Topologically, residues 1–30 are cytoplasmic; that stretch reads MPKAAGDAKLLIQSLNKAYAATPTNLKIID. The chain crosses the membrane as a helical span at residues 31–51; sequence LYVVFAVATALVQVVYMGIVG. Residues 52-54 lie on the Lumenal side of the membrane; that stretch reads SFP. A helical transmembrane segment spans residues 55-75; sequence FNSFLSGVLSSIGTAVLGVCL. Topologically, residues 76-93 are cytoplasmic; sequence RIQVNKDNKEFKDLPPER. Residues 94 to 114 traverse the membrane as a helical segment; sequence AFADFVLCNLVLHLVIMNFLG.

Belongs to the DAD/OST2 family. In terms of assembly, component of the oligosaccharyltransferase (OST) complex.

The protein localises to the endoplasmic reticulum membrane. It functions in the pathway protein modification; protein glycosylation. In terms of biological role, subunit of the oligosaccharyl transferase (OST) complex that catalyzes the initial transfer of a defined glycan (Glc(3)Man(9)GlcNAc(2) in eukaryotes) from the lipid carrier dolichol-pyrophosphate to an asparagine residue within an Asn-X-Ser/Thr consensus motif in nascent polypeptide chains, the first step in protein N-glycosylation. N-glycosylation occurs cotranslationally and the complex associates with the Sec61 complex at the channel-forming translocon complex that mediates protein translocation across the endoplasmic reticulum (ER). All subunits are required for a maximal enzyme activity. This is Dolichyl-diphosphooligosaccharide--protein glycosyltransferase subunit DAD2 (DAD2) from Hordeum vulgare (Barley).